The following is a 111-amino-acid chain: MPPLSESEFLALASKALDQLEAAIEAAADAADADVEINRTGNVMELEFEDGSKIIVNSQAPMQELWVAAKAGGFHFRNDGSKWVDTRGGGELYAALSGYMSQQAGVTLTLK.

The protein belongs to the frataxin family.

Its function is as follows. Involved in iron-sulfur (Fe-S) cluster assembly. May act as a regulator of Fe-S biogenesis. The chain is Iron-sulfur cluster assembly protein CyaY from Cupriavidus metallidurans (strain ATCC 43123 / DSM 2839 / NBRC 102507 / CH34) (Ralstonia metallidurans).